We begin with the raw amino-acid sequence, 620 residues long: Chaperone protein HscA homolog (620 aa).

It belongs to the heat shock protein 70 family.

In terms of biological role, chaperone involved in the maturation of iron-sulfur cluster-containing proteins. Has a low intrinsic ATPase activity which is markedly stimulated by HscB. This chain is Chaperone protein HscA homolog, found in Shewanella sp. (strain MR-7).